The chain runs to 345 residues: Molybdate/tungstate-binding protein WtpA (345 aa).

Positions 1 to 27 (MREGGVMKKRLLALIVAFAVLTAGCLG) are cleaved as a signal peptide. Molybdate contacts are provided by residues 41 to 42 (GS), Ser-75, 160 to 162 (DPC), Glu-218, and Tyr-236. Residues 41–42 (GS), Ser-75, 160–162 (DPC), Glu-218, and Tyr-236 each bind tungstate.

The protein belongs to the bacterial solute-binding protein 1 family. WtpA subfamily. As to quaternary structure, monomer. The complex is composed of two ATP-binding proteins (WtpC), two transmembrane proteins (WtpB) and a solute-binding protein (WtpA).

It localises to the cell membrane. Functionally, part of the ABC transporter complex WtpABC involved in molybdate/tungstate import. Binds tungstate and molybdate, with a preference for tungstate. This is Molybdate/tungstate-binding protein WtpA from Pyrococcus furiosus (strain ATCC 43587 / DSM 3638 / JCM 8422 / Vc1).